We begin with the raw amino-acid sequence, 810 residues long: LPS-assembly protein LptD (810 aa).

A signal peptide spans 1–29 (MTKRTLGYSYPIALTISLVPALTPAIVQA).

Belongs to the LptD family. Component of the lipopolysaccharide transport and assembly complex. Interacts with LptE and LptA.

It is found in the cell outer membrane. Functionally, together with LptE, is involved in the assembly of lipopolysaccharide (LPS) at the surface of the outer membrane. This chain is LPS-assembly protein LptD, found in Aeromonas hydrophila subsp. hydrophila (strain ATCC 7966 / DSM 30187 / BCRC 13018 / CCUG 14551 / JCM 1027 / KCTC 2358 / NCIMB 9240 / NCTC 8049).